A 133-amino-acid polypeptide reads, in one-letter code: Fatty acid-binding protein homolog 2 (133 aa).

A fatty acid is bound by residues Arg107 and 127–129 (RTY).

Belongs to the calycin superfamily. Fatty-acid binding protein (FABP) family.

May play a role in the acquisition, storage, and transport of lipids, and may be important to the organism since it is incapable of synthesizing most of its lipids de novo. The polypeptide is Fatty acid-binding protein homolog 2 (FABP2) (Echinococcus granulosus (Hydatid tapeworm)).